The primary structure comprises 432 residues: UDP-N-acetylmuramate--L-alanine ligase (432 aa).

108–114 (GAHGKTS) lines the ATP pocket.

The protein belongs to the MurCDEF family.

It is found in the cytoplasm. It catalyses the reaction UDP-N-acetyl-alpha-D-muramate + L-alanine + ATP = UDP-N-acetyl-alpha-D-muramoyl-L-alanine + ADP + phosphate + H(+). It functions in the pathway cell wall biogenesis; peptidoglycan biosynthesis. In terms of biological role, cell wall formation. The protein is UDP-N-acetylmuramate--L-alanine ligase of Bacillus velezensis (strain DSM 23117 / BGSC 10A6 / LMG 26770 / FZB42) (Bacillus amyloliquefaciens subsp. plantarum).